The primary structure comprises 165 residues: uncharacterized protein (165 aa).

A run of 6 helical transmembrane segments spans residues 6 to 26, 28 to 48, 54 to 74, 78 to 98, 110 to 130, and 138 to 158; these read ILFPCLLLAASVYAWLESGQA, LFSGQDQWPVLLMLLGAAFVY, AVTPHFFIGLLLFGIGLHFFA, WVWWPDDFEMLLFMIGFSLLV, AVSMICFSLFLYFFKQIMAWL, and ALLKEYWPFVFIGISLLLLLI.

The protein resides in the cell membrane. This is an uncharacterized protein from Bacillus subtilis (strain 168).